Consider the following 388-residue polypeptide: Xylose isomerase (388 aa).

Residues histidine 54 and aspartate 57 contribute to the active site. Glutamate 181, glutamate 217, histidine 220, aspartate 245, aspartate 255, aspartate 257, and aspartate 287 together coordinate Mg(2+).

It belongs to the xylose isomerase family. In terms of assembly, homotetramer. Mg(2+) is required as a cofactor.

The protein resides in the cytoplasm. It catalyses the reaction alpha-D-xylose = alpha-D-xylulofuranose. The protein is Xylose isomerase of Streptomyces avermitilis (strain ATCC 31267 / DSM 46492 / JCM 5070 / NBRC 14893 / NCIMB 12804 / NRRL 8165 / MA-4680).